The following is a 691-amino-acid chain: Ribonucleoprotein PTB-binding 2 (691 aa).

The span at 1-30 shows a compositional bias: gly residues; the sequence is MAAAAGDGGGEGGAGLGSAAGLGPGPGLRG. The segment at 1 to 47 is disordered; sequence MAAAAGDGGGEGGAGLGSAAGLGPGPGLRGQGPSAEAHEGAPDPMPA. N-acetylalanine is present on alanine 2. 3 consecutive RRM domains span residues 69–140, 142–220, and 231–309; these read RKIL…LQPT, ALLC…WMDV, and KCLC…FCAP. Disordered regions lie at residues 492–522 and 543–574; these read PNQH…EGNF and GHHK…GEPP. Positions 548 to 569 are enriched in polar residues; the sequence is QQSQPKGTEISSGAASKNQTSL.

As to quaternary structure, interacts with PTBP1 and RAVER1.

The protein resides in the nucleus. The protein localises to the cytoplasm. Functionally, may bind single-stranded nucleic acids. The protein is Ribonucleoprotein PTB-binding 2 (RAVER2) of Homo sapiens (Human).